The chain runs to 524 residues: Probable endopeptidase p60 (524 aa).

An N-terminal signal peptide occupies residues methionine 1 to alanine 27. A LysM 1 domain is found at serine 28–valine 71. In terms of domain architecture, SH3b spans lysine 78–valine 142. A disordered region spans residues glutamine 150 to alanine 188. The span at threonine 174–alanine 188 shows a compositional bias: low complexity. The LysM 2 domain occupies threonine 196–valine 239. Low complexity predominate over residues asparagine 272–proline 299. The disordered stretch occupies residues asparagine 272–alanine 313. The region spanning serine 314–valine 357 is the LysM 3 domain. Residues threonine 360 to serine 408 form a disordered region. The span at proline 362–serine 408 shows a compositional bias: low complexity. Positions serine 406 to valine 524 constitute a NlpC/P60 domain. Catalysis depends on cysteine 436, which acts as the Nucleophile. The Proton acceptor role is filled by histidine 486. Residue asparagine 498 is part of the active site.

This sequence belongs to the peptidase C40 family.

In terms of biological role, this major extracellular protein may be involved in the invasion of non-professional phagocytic cells by Listeria. This Listeria welshimeri protein is Probable endopeptidase p60 (iap).